The sequence spans 318 residues: Methenyltetrahydromethanopterin cyclohydrolase (318 aa).

Belongs to the MCH family.

It localises to the cytoplasm. It carries out the reaction 5,10-methenyl-5,6,7,8-tetrahydromethanopterin + H2O = N(5)-formyl-5,6,7,8-tetrahydromethanopterin + H(+). It functions in the pathway one-carbon metabolism; methanogenesis from CO(2); 5,10-methenyl-5,6,7,8-tetrahydromethanopterin from CO(2): step 3/3. Functionally, catalyzes the reversible interconversion of 5-formyl-H(4)MPT to methenyl-H(4)MPT(+). In Methanocella arvoryzae (strain DSM 22066 / NBRC 105507 / MRE50), this protein is Methenyltetrahydromethanopterin cyclohydrolase.